A 484-amino-acid polypeptide reads, in one-letter code: MTATATEQGARTAAATGRIARVIGPVVDVEFPADAIPGIYHALTAEITLNGATHAVTFEVSQHLGDNLVRAISLQTTDGLVRGAVVTDTGAPISVPVGDGVKGHIFNVLGQPLDVAESEIQYTERWPIHRKPPSFDQLEGSTEMLETGIKSIDLLTPYIKGGKIGLFGGAGVGKTVLIQEMITRVARNFGGTSVFAGVGERTREGNDLWVEMEESGVLKDTALVFGQMDEPPGTRLRVALSALTMAEYFRDVQNQDVLLFIDNIFRFTQAGSEVSTLLGRMPSAVGYQPNLADEMGLLQERITSTKGRSITSMQAVYVPADDYTDPAPAATFAHLDATTELSREIASRGLYPAIDPLTSTSRILDPQYIGKDHYDTAVRVKQILQKNKELQDIIAVLGVDELSEEDKIVVSRARRIQQFLSQNTYTAKQFTGVEGSTVSIKDTVEGFTAICNGDVDHIAEQAFFNVGAMDDVERQWAKIQESTK.

168–175 (GGAGVGKT) is an ATP binding site.

It belongs to the ATPase alpha/beta chains family. In terms of assembly, F-type ATPases have 2 components, CF(1) - the catalytic core - and CF(0) - the membrane proton channel. CF(1) has five subunits: alpha(3), beta(3), gamma(1), delta(1), epsilon(1). CF(0) has three main subunits: a(1), b(2) and c(9-12). The alpha and beta chains form an alternating ring which encloses part of the gamma chain. CF(1) is attached to CF(0) by a central stalk formed by the gamma and epsilon chains, while a peripheral stalk is formed by the delta and b chains.

Its subcellular location is the cell membrane. The catalysed reaction is ATP + H2O + 4 H(+)(in) = ADP + phosphate + 5 H(+)(out). In terms of biological role, produces ATP from ADP in the presence of a proton gradient across the membrane. The catalytic sites are hosted primarily by the beta subunits. The chain is ATP synthase subunit beta from Renibacterium salmoninarum (strain ATCC 33209 / DSM 20767 / JCM 11484 / NBRC 15589 / NCIMB 2235).